The chain runs to 310 residues: AMMECR1-like protein (310 aa).

The interval 26 to 92 (LSGSGTHSHG…SGALSPLPRP (67 aa)) is disordered. Composition is skewed to polar residues over residues 28 to 66 (GSGTHSHGNQSTTVPGSSSGPLQNHQHVDNSSGRENVSD) and 74 to 84 (SPITRMNTASG). At serine 74 the chain carries Phosphoserine. The region spanning 97 to 291 (NSTKNLVVTA…ISYAEYIASR (195 aa)) is the AMMECR1 domain.

The chain is AMMECR1-like protein (Ammecr1l) from Mus musculus (Mouse).